We begin with the raw amino-acid sequence, 215 residues long: Octanoyltransferase (215 aa).

A BPL/LPL catalytic domain is found at 33 to 209; the sequence is PDTPDQLWLV…QFARKLGYET (177 aa). Substrate contacts are provided by residues 72–79, 139–141, and 152–154; these read RGGQVTYH, SLG, and GLA. Cysteine 170 serves as the catalytic Acyl-thioester intermediate.

The protein belongs to the LipB family.

It is found in the cytoplasm. The catalysed reaction is octanoyl-[ACP] + L-lysyl-[protein] = N(6)-octanoyl-L-lysyl-[protein] + holo-[ACP] + H(+). The protein operates within protein modification; protein lipoylation via endogenous pathway; protein N(6)-(lipoyl)lysine from octanoyl-[acyl-carrier-protein]: step 1/2. Functionally, catalyzes the transfer of endogenously produced octanoic acid from octanoyl-acyl-carrier-protein onto the lipoyl domains of lipoate-dependent enzymes. Lipoyl-ACP can also act as a substrate although octanoyl-ACP is likely to be the physiological substrate. In Cellvibrio japonicus (strain Ueda107) (Pseudomonas fluorescens subsp. cellulosa), this protein is Octanoyltransferase.